Consider the following 757-residue polypeptide: 5-methyltetrahydropteroyltriglutamate--homocysteine methyltransferase (757 aa).

5-methyltetrahydropteroyltri-L-glutamate-binding positions include 16–19 (RELK) and K112. L-homocysteine is bound by residues 432-434 (IGS) and E485. L-methionine is bound by residues 432 to 434 (IGS) and E485. Residues 516–517 (RC) and W562 contribute to the 5-methyltetrahydropteroyltri-L-glutamate site. Residue D600 participates in L-homocysteine binding. D600 contributes to the L-methionine binding site. 5-methyltetrahydropteroyltri-L-glutamate is bound at residue E606. Residues H642, C644, and E666 each contribute to the Zn(2+) site. The active-site Proton donor is H695. A Zn(2+)-binding site is contributed by C727.

The protein belongs to the vitamin-B12 independent methionine synthase family. Zn(2+) serves as cofactor.

It catalyses the reaction 5-methyltetrahydropteroyltri-L-glutamate + L-homocysteine = tetrahydropteroyltri-L-glutamate + L-methionine. Its pathway is amino-acid biosynthesis; L-methionine biosynthesis via de novo pathway; L-methionine from L-homocysteine (MetE route): step 1/1. Catalyzes the transfer of a methyl group from 5-methyltetrahydrofolate to homocysteine resulting in methionine formation. The polypeptide is 5-methyltetrahydropteroyltriglutamate--homocysteine methyltransferase (Actinobacillus pleuropneumoniae serotype 5b (strain L20)).